A 320-amino-acid chain; its full sequence is Protoheme IX farnesyltransferase (320 aa).

Transmembrane regions (helical) follow at residues 38–58, 60–80, 109–129, 132–152, 159–179, 184–204, 222–242, 254–276, and 299–319; these read VIELLLVSTLPTMIFAQRGFP, IGLILATLVGGAFAAGSAGVF, EALVFAWILGAASIAILWFGA, LSAWLGLGAIVFYVVIYTMIL, NIVWGGAAGCFPVLIAWAAVT, WPAIVLFMVIFLWTPPHYWPL, AIAGAKVVSVQVVLYAWAMVA, GWVYTIAAVAAGAWFLYESHALY, and YLTLLFIALAVDPFVGSAIVG.

Belongs to the UbiA prenyltransferase family. Protoheme IX farnesyltransferase subfamily.

The protein resides in the cell membrane. The enzyme catalyses heme b + (2E,6E)-farnesyl diphosphate + H2O = Fe(II)-heme o + diphosphate. It functions in the pathway porphyrin-containing compound metabolism; heme O biosynthesis; heme O from protoheme: step 1/1. In terms of biological role, converts heme B (protoheme IX) to heme O by substitution of the vinyl group on carbon 2 of heme B porphyrin ring with a hydroxyethyl farnesyl side group. The chain is Protoheme IX farnesyltransferase from Paenarthrobacter aurescens (strain TC1).